Consider the following 698-residue polypeptide: Ion-translocating oxidoreductase complex subunit C (698 aa).

4Fe-4S ferredoxin-type domains lie at 366 to 397 (TEMG…QQLY) and 407 to 436 (KARN…VQYY). [4Fe-4S] cluster is bound by residues C377, C380, C383, C387, C416, C419, C422, and C426.

The protein belongs to the 4Fe4S bacterial-type ferredoxin family. RnfC subfamily. As to quaternary structure, the complex is composed of six subunits: RnfA, RnfB, RnfC, RnfD, RnfE and RnfG. [4Fe-4S] cluster is required as a cofactor.

The protein localises to the cell inner membrane. Functionally, part of a membrane-bound complex that couples electron transfer with translocation of ions across the membrane. In Yersinia pseudotuberculosis serotype O:1b (strain IP 31758), this protein is Ion-translocating oxidoreductase complex subunit C.